The following is a 134-amino-acid chain: Small ribosomal subunit protein uS8c (134 aa).

The protein belongs to the universal ribosomal protein uS8 family. In terms of assembly, part of the 30S ribosomal subunit.

Its subcellular location is the plastid. The protein resides in the chloroplast. Its function is as follows. One of the primary rRNA binding proteins, it binds directly to 16S rRNA central domain where it helps coordinate assembly of the platform of the 30S subunit. The polypeptide is Small ribosomal subunit protein uS8c (rps8) (Capsella bursa-pastoris (Shepherd's purse)).